Consider the following 332-residue polypeptide: Glycerol-3-phosphate dehydrogenase [NAD(P)+] (332 aa).

3 residues coordinate NADPH: W13, K34, and K108. Residues K108, G136, and S138 each contribute to the sn-glycerol 3-phosphate site. A140 serves as a coordination point for NADPH. Sn-glycerol 3-phosphate-binding residues include K191, D244, S254, R255, and N256. Catalysis depends on K191, which acts as the Proton acceptor. An NADPH-binding site is contributed by R255. V279 and E281 together coordinate NADPH.

This sequence belongs to the NAD-dependent glycerol-3-phosphate dehydrogenase family.

It localises to the cytoplasm. It carries out the reaction sn-glycerol 3-phosphate + NAD(+) = dihydroxyacetone phosphate + NADH + H(+). The enzyme catalyses sn-glycerol 3-phosphate + NADP(+) = dihydroxyacetone phosphate + NADPH + H(+). Its pathway is membrane lipid metabolism; glycerophospholipid metabolism. In terms of biological role, catalyzes the reduction of the glycolytic intermediate dihydroxyacetone phosphate (DHAP) to sn-glycerol 3-phosphate (G3P), the key precursor for phospholipid synthesis. The polypeptide is Glycerol-3-phosphate dehydrogenase [NAD(P)+] (Francisella tularensis subsp. tularensis (strain FSC 198)).